The chain runs to 431 residues: Tyrosine--tRNA ligase (431 aa).

Position 34 (Y34) interacts with L-tyrosine. Positions P39–H48 match the 'HIGH' region motif. Residues Y171 and Q175 each contribute to the L-tyrosine site. Positions K231–T235 match the 'KMSKS' region motif. K234 serves as a coordination point for ATP. The region spanning I353–K422 is the S4 RNA-binding domain.

This sequence belongs to the class-I aminoacyl-tRNA synthetase family. TyrS type 1 subfamily. As to quaternary structure, homodimer.

The protein resides in the cytoplasm. It catalyses the reaction tRNA(Tyr) + L-tyrosine + ATP = L-tyrosyl-tRNA(Tyr) + AMP + diphosphate + H(+). Catalyzes the attachment of tyrosine to tRNA(Tyr) in a two-step reaction: tyrosine is first activated by ATP to form Tyr-AMP and then transferred to the acceptor end of tRNA(Tyr). This is Tyrosine--tRNA ligase from Neisseria gonorrhoeae (strain ATCC 700825 / FA 1090).